The sequence spans 128 residues: UPF0102 protein Acry_2261 (128 aa).

It belongs to the UPF0102 family.

This is UPF0102 protein Acry_2261 from Acidiphilium cryptum (strain JF-5).